Consider the following 258-residue polypeptide: Pimeloyl-[acyl-carrier protein] methyl ester esterase (258 aa).

Residues 16–242 (LVLLHGWGLN…AAHAPFISHP (227 aa)) enclose the AB hydrolase-1 domain. Substrate is bound by residues Trp-22, 82-83 (SM), and 143-147 (FLALQ). Catalysis depends on Ser-82, which acts as the Nucleophile. Catalysis depends on residues Asp-207 and His-235. His-235 lines the substrate pocket.

The protein belongs to the AB hydrolase superfamily. Carboxylesterase BioH family. Monomer.

It localises to the cytoplasm. The enzyme catalyses 6-carboxyhexanoyl-[ACP] methyl ester + H2O = 6-carboxyhexanoyl-[ACP] + methanol + H(+). The protein operates within cofactor biosynthesis; biotin biosynthesis. Functionally, the physiological role of BioH is to remove the methyl group introduced by BioC when the pimeloyl moiety is complete. It allows to synthesize pimeloyl-ACP via the fatty acid synthetic pathway through the hydrolysis of the ester bonds of pimeloyl-ACP esters. The chain is Pimeloyl-[acyl-carrier protein] methyl ester esterase from Yersinia pseudotuberculosis serotype O:1b (strain IP 31758).